Reading from the N-terminus, the 269-residue chain is UPF0354 protein YtpQ (269 aa).

It belongs to the UPF0354 family.

The polypeptide is UPF0354 protein YtpQ (ytpQ) (Bacillus subtilis (strain 168)).